The sequence spans 240 residues: Ditrans,polycis-undecaprenyl-diphosphate synthase ((2E,6E)-farnesyl-diphosphate specific) (240 aa).

Residue Asp-18 is part of the active site. Asp-18 contributes to the Mg(2+) binding site. Residues 19-22 (GNGR), Trp-23, Arg-31, His-35, and 63-65 (SSE) contribute to the substrate site. Asn-66 functions as the Proton acceptor in the catalytic mechanism. Residues Trp-67, Arg-69, Arg-186, and 192–194 (RIS) contribute to the substrate site. A Mg(2+)-binding site is contributed by Glu-205.

The protein belongs to the UPP synthase family. In terms of assembly, homodimer. Mg(2+) serves as cofactor.

The catalysed reaction is 8 isopentenyl diphosphate + (2E,6E)-farnesyl diphosphate = di-trans,octa-cis-undecaprenyl diphosphate + 8 diphosphate. Functionally, catalyzes the sequential condensation of isopentenyl diphosphate (IPP) with (2E,6E)-farnesyl diphosphate (E,E-FPP) to yield (2Z,6Z,10Z,14Z,18Z,22Z,26Z,30Z,34E,38E)-undecaprenyl diphosphate (di-trans,octa-cis-UPP). UPP is the precursor of glycosyl carrier lipid in the biosynthesis of bacterial cell wall polysaccharide components such as peptidoglycan and lipopolysaccharide. This chain is Ditrans,polycis-undecaprenyl-diphosphate synthase ((2E,6E)-farnesyl-diphosphate specific), found in Pasteurella multocida (strain Pm70).